The sequence spans 95 residues: MKLDSGIYSEAQRVVRTPKFRYIMLGLVGAAVVPTAYMRRGYTVPAHSLDNINGVDTTKASVMGTEQRAAMTKGKSLQEMMDDDEVTYLMFSSIM.

The helical transmembrane segment at 20 to 38 (FRYIMLGLVGAAVVPTAYM) threads the bilayer.

It localises to the mitochondrion membrane. In Saccharomyces cerevisiae (strain RM11-1a) (Baker's yeast), this protein is Stationary phase-expressed protein 1 (SPG1).